The chain runs to 154 residues: Myoglobin (154 aa).

One can recognise a Globin domain in the interval 2–148 (GLSDQEWQHV…FRNDMASKYK (147 aa)). H65 is a binding site for nitrite. H65 is a binding site for O2. H94 serves as a coordination point for heme b.

Monomeric.

Its subcellular location is the cytoplasm. It localises to the sarcoplasm. It carries out the reaction Fe(III)-heme b-[protein] + nitric oxide + H2O = Fe(II)-heme b-[protein] + nitrite + 2 H(+). It catalyses the reaction H2O2 + AH2 = A + 2 H2O. Its function is as follows. Monomeric heme protein which primary function is to store oxygen and facilitate its diffusion within muscle tissues. Reversibly binds oxygen through a pentacoordinated heme iron and enables its timely and efficient release as needed during periods of heightened demand. Depending on the oxidative conditions of tissues and cells, and in addition to its ability to bind oxygen, it also has a nitrite reductase activity whereby it regulates the production of bioactive nitric oxide. Under stress conditions, like hypoxia and anoxia, it also protects cells against reactive oxygen species thanks to its pseudoperoxidase activity. The polypeptide is Myoglobin (Dromaius novaehollandiae (Emu)).